Here is a 381-residue protein sequence, read N- to C-terminus: Guanine nucleotide-binding protein G(olf) subunit alpha (381 aa).

A disordered region spans residues 1–25; sequence MGCLGNSSKTAEDQGVDEKERREAN. A lipid anchor (N-palmitoyl glycine) is attached at G2. C3 is lipidated: S-palmitoyl cysteine. The span at 10 to 25 shows a compositional bias: basic and acidic residues; the sequence is TAEDQGVDEKERREAN. Residues 41 to 381 form the G-alpha domain; the sequence is ATHRLLLLGA…RMHLKQYELL (341 aa). Residues 44-57 form a G1 motif region; it reads RLLLLGAGESGKST. GTP is bound by residues E52, S53, G54, K55, S56, and T57. Mg(2+) is bound at residue S56. T178 is subject to Phosphothreonine. Residues 183–191 are G2 motif; sequence DLLRCRVLT. Residues L185, R186, and T191 each contribute to the GTP site. Mg(2+) contacts are provided by T191 and D210. The tract at residues 206–215 is G3 motif; it reads FHMFDVGGQR. Positions 213, 279, 280, 282, and 353 each coordinate GTP. The interval 275 to 282 is G4 motif; the sequence is ILFLNKQD. Residues 351 to 356 are G5 motif; sequence TCAVDT.

Belongs to the G-alpha family. G(s) subfamily. As to quaternary structure, g proteins are composed of 3 units; alpha, beta and gamma. The alpha chain contains the guanine nucleotide binding site. Interacts with GAS2L2. Interacts (GDP-bound form) with RIC8B (via C-terminus); promoting GNAL folding and association with the plasma membrane.

It is found in the cell membrane. It catalyses the reaction GTP + H2O = GDP + phosphate + H(+). Guanine nucleotide-binding protein (G protein) involved as transducer in olfactory signal transduction controlled by G protein-coupled receptors (GPCRs). Contains the guanine nucleotide binding site and alternates between an active, GTP-bound state and an inactive, GDP-bound state. Signaling by an activated GPCR promotes GDP release and GTP binding. The alpha subunit has a low GTPase activity that converts bound GTP to GDP, thereby terminating the signal. Both GDP release and GTP hydrolysis are modulated by numerous regulatory proteins. GNAL/G(olf) alpha specifically mediates olfactory signal transduction within the olfactory neuroepithelium and the basal ganglia following GPCRs activation. Acts by promoting the specific activation of adenylyl cyclase ADCY3, resulting in increased levels of the signaling molecule cAMP. This Mus musculus (Mouse) protein is Guanine nucleotide-binding protein G(olf) subunit alpha.